The sequence spans 421 residues: D-amino acid dehydrogenase (421 aa).

Residue 3 to 17 coordinates FAD; that stretch reads VLVLGGGVVGVASAY.

Belongs to the DadA oxidoreductase family. It depends on FAD as a cofactor.

The enzyme catalyses a D-alpha-amino acid + A + H2O = a 2-oxocarboxylate + AH2 + NH4(+). It functions in the pathway amino-acid degradation; D-alanine degradation; NH(3) and pyruvate from D-alanine: step 1/1. In terms of biological role, oxidative deamination of D-amino acids. The sequence is that of D-amino acid dehydrogenase from Methylobacterium nodulans (strain LMG 21967 / CNCM I-2342 / ORS 2060).